A 516-amino-acid chain; its full sequence is GMP synthase [glutamine-hydrolyzing] (516 aa).

Residues 7 to 203 (SVIVLDFGSQ…LIDIAGITPD (197 aa)) form the Glutamine amidotransferase type-1 domain. C84 acts as the Nucleophile in catalysis. Active-site residues include H177 and E179. Positions 204–391 (WSPKSFIQHQ…LGIAEDILMR (188 aa)) constitute a GMPS ATP-PPase domain. ATP is bound at residue 231–237 (SGGVDST).

As to quaternary structure, homodimer.

The catalysed reaction is XMP + L-glutamine + ATP + H2O = GMP + L-glutamate + AMP + diphosphate + 2 H(+). The protein operates within purine metabolism; GMP biosynthesis; GMP from XMP (L-Gln route): step 1/1. Functionally, catalyzes the synthesis of GMP from XMP. The polypeptide is GMP synthase [glutamine-hydrolyzing] (Chlorobaculum tepidum (strain ATCC 49652 / DSM 12025 / NBRC 103806 / TLS) (Chlorobium tepidum)).